The sequence spans 211 residues: Probable GTP-binding protein EngB (211 aa).

The EngB-type G domain occupies 30–204 (EGFEVAFAGR…YTVLAGWMEL (175 aa)). Residues 38-45 (GRSNAGKS), 64-68 (GRTQL), 82-85 (DLPG), 149-152 (TKAD), and 182-185 (LFSA) each bind GTP. 2 residues coordinate Mg(2+): S45 and T66.

This sequence belongs to the TRAFAC class TrmE-Era-EngA-EngB-Septin-like GTPase superfamily. EngB GTPase family. Requires Mg(2+) as cofactor.

Functionally, necessary for normal cell division and for the maintenance of normal septation. The protein is Probable GTP-binding protein EngB of Pseudomonas syringae pv. tomato (strain ATCC BAA-871 / DC3000).